Here is a 223-residue protein sequence, read N- to C-terminus: Deoxyribose-phosphate aldolase (223 aa).

Asp91 acts as the Proton donor/acceptor in catalysis. Lys154 (schiff-base intermediate with acetaldehyde) is an active-site residue. Lys183 serves as the catalytic Proton donor/acceptor.

The protein belongs to the DeoC/FbaB aldolase family. DeoC type 1 subfamily.

It is found in the cytoplasm. It carries out the reaction 2-deoxy-D-ribose 5-phosphate = D-glyceraldehyde 3-phosphate + acetaldehyde. It functions in the pathway carbohydrate degradation; 2-deoxy-D-ribose 1-phosphate degradation; D-glyceraldehyde 3-phosphate and acetaldehyde from 2-deoxy-alpha-D-ribose 1-phosphate: step 2/2. In terms of biological role, catalyzes a reversible aldol reaction between acetaldehyde and D-glyceraldehyde 3-phosphate to generate 2-deoxy-D-ribose 5-phosphate. The protein is Deoxyribose-phosphate aldolase of Geobacillus sp. (strain WCH70).